The primary structure comprises 249 residues: MVNSPQNPRQDQRQDLDLTSFSATGGEPVEWRISDAPVPYPEAVAAMEARVAAIAAGEAPELVWLLEHPPLYTSGTSGKDSDLLDPRFPTFATGRGGQLTYHGPGQRVAYIMLDLKRRRPDVRAYVASLEELILKTLAAFNVRGERREDRVGVWVKRPDKGDGYEDKIAAIGVRLKRWVSFHGIAINVEPELSHFAGIVPCGVADPRYGVTSLVDLGQLVTMADVDVALRQAFEELFGPTRALVPEAAA.

A disordered region spans residues 1–23 (MVNSPQNPRQDQRQDLDLTSFSA). Positions 57–241 (GEAPELVWLL…AFEELFGPTR (185 aa)) constitute a BPL/LPL catalytic domain. Residues 95-102 (RGGQLTYH), 170-172 (AIG), and 183-185 (GIA) contribute to the substrate site. C201 serves as the catalytic Acyl-thioester intermediate.

It belongs to the LipB family.

It localises to the cytoplasm. It catalyses the reaction octanoyl-[ACP] + L-lysyl-[protein] = N(6)-octanoyl-L-lysyl-[protein] + holo-[ACP] + H(+). Its pathway is protein modification; protein lipoylation via endogenous pathway; protein N(6)-(lipoyl)lysine from octanoyl-[acyl-carrier-protein]: step 1/2. Catalyzes the transfer of endogenously produced octanoic acid from octanoyl-acyl-carrier-protein onto the lipoyl domains of lipoate-dependent enzymes. Lipoyl-ACP can also act as a substrate although octanoyl-ACP is likely to be the physiological substrate. In Bradyrhizobium diazoefficiens (strain JCM 10833 / BCRC 13528 / IAM 13628 / NBRC 14792 / USDA 110), this protein is Octanoyltransferase.